A 603-amino-acid polypeptide reads, in one-letter code: NADH-ubiquinone oxidoreductase chain 5 (603 aa).

16 helical membrane-spanning segments follow: residues 4–24 (FTTMTALTLTSLIPPITATLI), 38–58 (TAIASAFTISLIPTTMFICLG), 89–109 (FLPVALFVTWSIMEFSLWYMA), 122–142 (LIFLITMIILITANNLLQLFI), 171–191 (AILYNRIGDIGFILTLAWFLL), 211–233 (LPLLGLLLAAAGKSAQLGLHPWL), 241–261 (TPVSALLHSSTMVVAGIFLLI), 273–293 (IQTLALCLGAITTLFAAICAL), 301–320 (IVAFSTSSQLGLMMVTIGIN), 325–347 (AFLHICTHAFFKALLFMCSGSII), 366–386 (MPLTSTSLTISSLALAGMPFL), 405–424 (NAWALSITLIATSLTSAYST), 457–477 (LMTGSLFTGFLITSNIPPTSL), 488–508 (LAALTATLLGLLVALDLNYLA), 537–557 (IPHLSLLMSQNLSLLLLDLTW), and 582–602 (GMIKLYFLSFLIPLLLTLLMI).

Belongs to the complex I subunit 5 family. Core subunit of respiratory chain NADH dehydrogenase (Complex I) which is composed of 45 different subunits.

Its subcellular location is the mitochondrion inner membrane. The enzyme catalyses a ubiquinone + NADH + 5 H(+)(in) = a ubiquinol + NAD(+) + 4 H(+)(out). Its function is as follows. Core subunit of the mitochondrial membrane respiratory chain NADH dehydrogenase (Complex I) which catalyzes electron transfer from NADH through the respiratory chain, using ubiquinone as an electron acceptor. Essential for the catalytic activity and assembly of complex I. The chain is NADH-ubiquinone oxidoreductase chain 5 (MT-ND5) from Pongo pygmaeus (Bornean orangutan).